The chain runs to 473 residues: Sulfate adenylyltransferase subunit 1 (473 aa).

The 220-residue stretch at 19–238 folds into the tr-type G domain; it reads KTLLKFLTCG…IKIKNSISSE (220 aa). The G1 stretch occupies residues 28-35; the sequence is GSVDDGKS. Residue 28-35 participates in GTP binding; sequence GSVDDGKS. The G2 stretch occupies residues 86–90; the sequence is GITID. A G3 region spans residues 107-110; that stretch reads DTPG. Residues 107–111 and 162–165 each bind GTP; these read DTPGH and NKMD. Residues 162 to 165 form a G4 region; it reads NKMD. The segment at 200–202 is G5; sequence SAL.

This sequence belongs to the TRAFAC class translation factor GTPase superfamily. Classic translation factor GTPase family. CysN/NodQ subfamily. In terms of assembly, heterodimer composed of CysD, the smaller subunit, and CysN.

It catalyses the reaction sulfate + ATP + H(+) = adenosine 5'-phosphosulfate + diphosphate. Its pathway is sulfur metabolism; hydrogen sulfide biosynthesis; sulfite from sulfate: step 1/3. Functionally, with CysD forms the ATP sulfurylase (ATPS) that catalyzes the adenylation of sulfate producing adenosine 5'-phosphosulfate (APS) and diphosphate, the first enzymatic step in sulfur assimilation pathway. APS synthesis involves the formation of a high-energy phosphoric-sulfuric acid anhydride bond driven by GTP hydrolysis by CysN coupled to ATP hydrolysis by CysD. This chain is Sulfate adenylyltransferase subunit 1, found in Buchnera aphidicola subsp. Acyrthosiphon pisum (strain APS) (Acyrthosiphon pisum symbiotic bacterium).